A 266-amino-acid polypeptide reads, in one-letter code: Metallo-beta-lactamase VIM-2 (266 aa).

An N-terminal signal peptide occupies residues Met1–Ala20. Zn(2+) contacts are provided by His114, His116, and Cys198.

It belongs to the metallo-beta-lactamase superfamily. Class-B beta-lactamase family. In terms of assembly, monomer. Requires Zn(2+) as cofactor.

The protein resides in the periplasm. The enzyme catalyses a beta-lactam + H2O = a substituted beta-amino acid. With respect to regulation, inhibited by chelating agents such as EDTA. Inhibited by a fungal natural product, aspergillomarasmine A (AMA). Inhibited by 2-triazolylthioacetamides. Functionally, class B beta-lactamase which confers resistance to the beta-lactam antibiotics, including penicillins, cephalosporins and carbapenems. Acts via hydrolysis of the beta-lactam ring. Has penicillin-, cephalosporin- and carbapenem-hydrolyzing activities. This Escherichia coli protein is Metallo-beta-lactamase VIM-2.